The chain runs to 352 residues: GTPase Obg (352 aa).

Positions 1 to 159 (MHFLDQAKIY…MWVWLRLKLL (159 aa)) constitute an Obg domain. The region spanning 160 to 327 (ADVGLLGLPN…LLDAVLGYLP (168 aa)) is the OBG-type G domain. GTP contacts are provided by residues 166-173 (GLPNAGKS), 191-195 (FTTLV), 212-215 (DIPG), 279-282 (NKLD), and 308-310 (SGA). Residues Ser173 and Thr193 each contribute to the Mg(2+) site. Positions 329–352 (STSTETKGSEVEEVDEEGGEWSPI) are disordered. Residues 339 to 352 (VEEVDEEGGEWSPI) are compositionally biased toward acidic residues.

Belongs to the TRAFAC class OBG-HflX-like GTPase superfamily. OBG GTPase family. Monomer. The cofactor is Mg(2+).

It is found in the cytoplasm. An essential GTPase which binds GTP, GDP and possibly (p)ppGpp with moderate affinity, with high nucleotide exchange rates and a fairly low GTP hydrolysis rate. Plays a role in control of the cell cycle, stress response, ribosome biogenesis and in those bacteria that undergo differentiation, in morphogenesis control. This Erythrobacter litoralis (strain HTCC2594) protein is GTPase Obg.